A 314-amino-acid polypeptide reads, in one-letter code: MNEQVEAFLRHLADERNLSANTIAAYRTDLEQFCEFLHGRRLFAWHDVTHDDVLAFLIDLRERRYASSTVARRVAAVKSFFTFLTGRGIVQRDPTERIDSPKVDRDLPRALTPRQVDELLELPLRSPTPERIRDKAMLELLYATGVRVSELVALNVNDVDLERNEVRCIGKNGRVRVLPINGSAATALEEYFDISRNQLARGSGSSTEALFLNHRGKRLTRQGFWLILKQYAEELGLSDLTPHVLRHSFAVHMLNAGFDLRAVQELLGHTSISTTQIYTHLNHESSHTPHAHPAPRASEVNGVRDEQALVPEEK.

The Core-binding (CB) domain maps to 1 to 85 (MNEQVEAFLR…AVKSFFTFLT (85 aa)). A Tyr recombinase domain is found at 106 to 291 (DLPRALTPRQ…NHESSHTPHA (186 aa)). Catalysis depends on residues R147, K171, H243, R246, and H269. Y278 (O-(3'-phospho-DNA)-tyrosine intermediate) is an active-site residue. Positions 284-314 (ESSHTPHAHPAPRASEVNGVRDEQALVPEEK) are disordered. Basic and acidic residues predominate over residues 302-314 (GVRDEQALVPEEK).

Belongs to the 'phage' integrase family. XerC subfamily. In terms of assembly, forms a cyclic heterotetrameric complex composed of two molecules of XerC and two molecules of XerD.

It localises to the cytoplasm. In terms of biological role, site-specific tyrosine recombinase, which acts by catalyzing the cutting and rejoining of the recombining DNA molecules. The XerC-XerD complex is essential to convert dimers of the bacterial chromosome into monomers to permit their segregation at cell division. It also contributes to the segregational stability of plasmids. In Roseiflexus castenholzii (strain DSM 13941 / HLO8), this protein is Tyrosine recombinase XerC.